The following is a 105-amino-acid chain: MTVLCTLMAFVMVVAISSLTVDAIPHSHESYWDQQDDIDRDEFLELLSRLSRTVMNRPEMENSKRGLDLGLSRGFSGSQAAKHLMGLAAANYAGGPGRRRRSEQA.

Positions 1-23 are cleaved as a signal peptide; it reads MTVLCTLMAFVMVVAISSLTVDA. Positions 24 to 63 are excised as a propeptide; it reads IPHSHESYWDQQDDIDRDEFLELLSRLSRTVMNRPEMENS. Proline amide is present on P96. Positions 101 to 105 are excised as a propeptide; it reads RSEQA.

Expressed in central brain, antennal lobes, retrocerebral complex and gnathal, thoracic and abdominal ganglia but not in optical lobes (at protein level).

Its subcellular location is the secreted. Regulation of fluid secretion. Stimulates Malpighian tubules fluid secretion. This is Diuretic hormone class 2 from Camponotus floridanus (Florida carpenter ant).